A 422-amino-acid chain; its full sequence is L-threonine dehydratase biosynthetic IlvA (422 aa).

Residue Lys-56 is modified to N6-(pyridoxal phosphate)lysine. Pyridoxal 5'-phosphate contacts are provided by residues Asn-83, 189–193 (GGGGL), and Ser-315. Positions 339–413 (HYFILNFPQR…FDPSNIYINE (75 aa)) constitute an ACT-like domain.

It belongs to the serine/threonine dehydratase family. As to quaternary structure, homotetramer. Pyridoxal 5'-phosphate serves as cofactor.

The catalysed reaction is L-threonine = 2-oxobutanoate + NH4(+). It participates in amino-acid biosynthesis; L-isoleucine biosynthesis; 2-oxobutanoate from L-threonine: step 1/1. Functionally, catalyzes the anaerobic formation of alpha-ketobutyrate and ammonia from threonine in a two-step reaction. The first step involved a dehydration of threonine and a production of enamine intermediates (aminocrotonate), which tautomerizes to its imine form (iminobutyrate). Both intermediates are unstable and short-lived. The second step is the nonenzymatic hydrolysis of the enamine/imine intermediates to form 2-ketobutyrate and free ammonia. In the low water environment of the cell, the second step is accelerated by RidA. This Staphylococcus aureus (strain bovine RF122 / ET3-1) protein is L-threonine dehydratase biosynthetic IlvA (ilvA).